Reading from the N-terminus, the 209-residue chain is Protein GET1 (209 aa).

Over methionine 1–leucine 3 the chain is Lumenal. A helical membrane pass occupies residues leucine 4–lysine 23. Residues threonine 24–arginine 110 lie on the Cytoplasmic side of the membrane. Residues tryptophan 74 to serine 101 adopt a coiled-coil conformation. A helical transmembrane segment spans residues tryptophan 111–phenylalanine 131. Residues tryptophan 132 to serine 155 lie on the Lumenal side of the membrane. Residues valine 156–valine 172 form a helical membrane-spanning segment. The Cytoplasmic segment spans residues isoleucine 173 to leucine 209. The interval methionine 188–leucine 209 is disordered.

Belongs to the WRB/GET1 family. Interacts with GET3.

The protein resides in the endoplasmic reticulum membrane. Required for the post-translational delivery of tail-anchored (TA) proteins to the endoplasmic reticulum. Acts as a membrane receptor for soluble GET3, which recognizes and selectively binds the transmembrane domain of TA proteins in the cytosol. The polypeptide is Protein GET1 (Chaetomium thermophilum (strain DSM 1495 / CBS 144.50 / IMI 039719) (Thermochaetoides thermophila)).